We begin with the raw amino-acid sequence, 621 residues long: Cystathionine gamma-synthase (621 aa).

The residue at position 429 (Lys-429) is an N6-(pyridoxal phosphate)lysine.

The protein belongs to the trans-sulfuration enzymes family. MET7 subfamily. As to quaternary structure, both met-3 and met-7 are required to form a functional cystathionine gamma-synthase. Pyridoxal 5'-phosphate is required as a cofactor.

The enzyme catalyses O-succinyl-L-homoserine + L-cysteine = L,L-cystathionine + succinate + H(+). It functions in the pathway amino-acid biosynthesis; L-methionine biosynthesis via de novo pathway; L-cystathionine from O-succinyl-L-homoserine: step 1/1. Its function is as follows. Catalyzes the formation of L-cystathionine from O-succinyl-L-homoserine (OSHS) and L-cysteine, via a gamma-replacement reaction. In the absence of thiol, catalyzes gamma-elimination to form 2-oxobutanoate, succinate and ammonia. The chain is Cystathionine gamma-synthase (met-7) from Neurospora crassa (strain ATCC 24698 / 74-OR23-1A / CBS 708.71 / DSM 1257 / FGSC 987).